A 96-amino-acid chain; its full sequence is Glutamyl-tRNA(Gln) amidotransferase subunit C (96 aa).

It belongs to the GatC family. Heterotrimer of A, B and C subunits.

The enzyme catalyses L-glutamyl-tRNA(Gln) + L-glutamine + ATP + H2O = L-glutaminyl-tRNA(Gln) + L-glutamate + ADP + phosphate + H(+). It carries out the reaction L-aspartyl-tRNA(Asn) + L-glutamine + ATP + H2O = L-asparaginyl-tRNA(Asn) + L-glutamate + ADP + phosphate + 2 H(+). Its function is as follows. Allows the formation of correctly charged Asn-tRNA(Asn) or Gln-tRNA(Gln) through the transamidation of misacylated Asp-tRNA(Asn) or Glu-tRNA(Gln) in organisms which lack either or both of asparaginyl-tRNA or glutaminyl-tRNA synthetases. The reaction takes place in the presence of glutamine and ATP through an activated phospho-Asp-tRNA(Asn) or phospho-Glu-tRNA(Gln). The protein is Glutamyl-tRNA(Gln) amidotransferase subunit C of Neisseria meningitidis serogroup A / serotype 4A (strain DSM 15465 / Z2491).